The following is a 65-amino-acid chain: Hirudin-3B' (65 aa).

Residues 1 to 3 (VVY) form an interaction with thrombin active site region. Intrachain disulfides connect Cys-6/Cys-14, Cys-16/Cys-28, and Cys-22/Cys-39. The disordered stretch occupies residues 40–65 (VTGEGTPKPQSHNDGDFEEIPEEYLQ). O-linked (GalNAc...) threonine glycosylation is present at Thr-45. The interaction with fibrinogen-binding exosite of thrombin stretch occupies residues 55 to 65 (DFEEIPEEYLQ). The span at 55 to 65 (DFEEIPEEYLQ) shows a compositional bias: acidic residues. Tyr-63 carries the sulfotyrosine modification.

Belongs to the protease inhibitor I14 (hirudin) family.

Its subcellular location is the secreted. Functionally, hirudin is a potent thrombin-specific protease inhibitor. It forms a stable non-covalent complex with alpha-thrombin, thereby abolishing its ability to cleave fibrinogen. This chain is Hirudin-3B', found in Hirudo medicinalis (Medicinal leech).